The primary structure comprises 297 residues: 4-hydroxy-tetrahydrodipicolinate synthase (297 aa).

Threonine 47 lines the pyruvate pocket. Catalysis depends on tyrosine 135, which acts as the Proton donor/acceptor. The active-site Schiff-base intermediate with substrate is lysine 163. Isoleucine 205 lines the pyruvate pocket.

It belongs to the DapA family. As to quaternary structure, homotetramer; dimer of dimers.

It localises to the cytoplasm. It catalyses the reaction L-aspartate 4-semialdehyde + pyruvate = (2S,4S)-4-hydroxy-2,3,4,5-tetrahydrodipicolinate + H2O + H(+). The protein operates within amino-acid biosynthesis; L-lysine biosynthesis via DAP pathway; (S)-tetrahydrodipicolinate from L-aspartate: step 3/4. Its function is as follows. Catalyzes the condensation of (S)-aspartate-beta-semialdehyde [(S)-ASA] and pyruvate to 4-hydroxy-tetrahydrodipicolinate (HTPA). The polypeptide is 4-hydroxy-tetrahydrodipicolinate synthase (Cytophaga hutchinsonii (strain ATCC 33406 / DSM 1761 / CIP 103989 / NBRC 15051 / NCIMB 9469 / D465)).